We begin with the raw amino-acid sequence, 488 residues long: Transmembrane protein 39A (488 aa).

N-linked (GlcNAc...) asparagine glycosylation is found at asparagine 31 and asparagine 39. 3 consecutive transmembrane segments (helical) span residues 72-92, 110-130, and 155-175; these read GLLF…IQYI, TSLN…VMLA, and LITA…WTLV. Asparagine 180 carries N-linked (GlcNAc...) asparagine glycosylation. Transmembrane regions (helical) follow at residues 182-202, 287-307, 319-339, 420-440, and 446-466; these read SVLN…LCCF, EVLF…LCFV, CEHL…QLLP, LLNL…YSLL, and NHTL…FKLL.

It belongs to the TMEM39 family.

Its subcellular location is the endoplasmic reticulum membrane. Regulates autophagy by controlling the spatial distribution and levels of the intracellular phosphatidylinositol 4-phosphate (PtdIns(4)P) pools. Modulates (PtdIns(4)P) levels by regulating the ER-to-Golgi trafficking of the phosphatidylinositide phosphatase SACM1L. The chain is Transmembrane protein 39A (tmem39a) from Xenopus tropicalis (Western clawed frog).